We begin with the raw amino-acid sequence, 238 residues long: Large ribosomal subunit protein uL5c (238 aa).

Belongs to the universal ribosomal protein uL5 family. Part of the 50S ribosomal subunit; contacts the 5S rRNA.

It localises to the plastid. The protein localises to the chloroplast. Its function is as follows. Binds 5S rRNA, forms part of the central protuberance of the 50S subunit. The chain is Large ribosomal subunit protein uL5c (rpl5) from Trieres chinensis (Marine centric diatom).